We begin with the raw amino-acid sequence, 444 residues long: DNA primase DnaG (444 aa).

The Toprim domain occupies 186–260 (DSIIVVEGRN…EVDFVARAPP (75 aa)). Mg(2+) contacts are provided by Glu-192, Asp-234, and Asp-236.

Belongs to the archaeal DnaG primase family. Forms a ternary complex with MCM helicase and DNA. Component of the archaeal exosome complex. The cofactor is Mg(2+).

The enzyme catalyses ssDNA + n NTP = ssDNA/pppN(pN)n-1 hybrid + (n-1) diphosphate.. Functionally, RNA polymerase that catalyzes the synthesis of short RNA molecules used as primers for DNA polymerase during DNA replication. Also part of the exosome, which is a complex involved in RNA degradation. Acts as a poly(A)-binding protein that enhances the interaction between heteromeric, adenine-rich transcripts and the exosome. This Thermoplasma volcanium (strain ATCC 51530 / DSM 4299 / JCM 9571 / NBRC 15438 / GSS1) protein is DNA primase DnaG.